A 460-amino-acid polypeptide reads, in one-letter code: Ankyrin repeat and MYND domain-containing protein 2 (460 aa).

ANK repeat units lie at residues 45–74 (HGMT…DVNC), 79–108 (HGYT…ETDV), and 159–188 (KLAG…NPLL). Residues cysteine 320, cysteine 323, cysteine 332, cysteine 335, cysteine 341, cysteine 345, histidine 353, and cysteine 357 each contribute to the Zn(2+) site. Residues 320–357 (CTTCGEKGADKRCSVCKVVMYCDQNCQKTHWFTHKKVC) form an MYND-type zinc finger. Basic and acidic residues-rich tracts occupy residues 371 to 387 (AAKE…KDEA) and 425 to 436 (ELTKEPEARAPR). The segment at 371-460 (AAKEKRRQEK…ALQKIQDSEE (90 aa)) is disordered.

The protein resides in the cell projection. The protein localises to the cilium. In terms of biological role, may be involved in the trafficking of signaling proteins to the cilia. This Gallus gallus (Chicken) protein is Ankyrin repeat and MYND domain-containing protein 2 (ANKMY2).